Reading from the N-terminus, the 328-residue chain is Solute-binding protein Bamb_6123 (328 aa).

The first 26 residues, 1 to 26 (MTHRFPRSRTALAVALMAGFAMSAQA), serve as a signal peptide directing secretion. 6 residues coordinate beta-D-galacturonate: histidine 35, glutamate 73, arginine 89, arginine 149, asparagine 209, and glutamate 236. Beta-D-glucuronate contacts are provided by histidine 35, glutamate 73, arginine 89, arginine 149, asparagine 209, and glutamate 236.

It belongs to the bacterial solute-binding protein 7 family. The complex is comprised of an extracytoplasmic solute-binding protein and a heteromeric permease formed by two transmembrane proteins.

It localises to the periplasm. Functionally, solute-binding protein that binds D-galacturonate and D-glucuronate (in vitro). Probably part of a tripartite ATP-independent periplasmic (TRAP) transport system that mediates solute transport into the cytoplasm. This is Solute-binding protein Bamb_6123 from Burkholderia ambifaria (strain ATCC BAA-244 / DSM 16087 / CCUG 44356 / LMG 19182 / AMMD) (Burkholderia cepacia (strain AMMD)).